The primary structure comprises 229 residues: MSSLREIILDTETTGLDPRQGHRIVEIGAIEMVNKVLTGRNFHFYINPERDMPFDAYRIHGISGEFLKDKPLFHTIADDFLEFISDSKLIIHNAPFDIKFLNHELSLLKRAEIKLLELSNAIDTLVMARSMFPGSKYNLDALCKRFKVDNSGRQLHGALKDAALLAEVYVELTGGRQSAFKMVDKSVETNNLATNQVNNKTEQATIVIKPTKEELQKHKEFLSSILKTA.

Positions 10 and 12 each coordinate a divalent metal cation. Substrate is bound by residues D10, E12, D55, and H60. H156 serves as the catalytic Proton acceptor. D161 serves as a coordination point for a divalent metal cation. Position 161 (D161) interacts with substrate.

As to quaternary structure, DNA polymerase III contains a core (composed of alpha, epsilon and theta chains) that associates with a tau subunit. This core dimerizes to form the POLIII' complex. PolIII' associates with the gamma complex (composed of gamma, delta, delta', psi and chi chains) and with the beta chain to form the complete DNA polymerase III complex. It depends on Mg(2+) as a cofactor. Mn(2+) is required as a cofactor.

It catalyses the reaction DNA(n) + a 2'-deoxyribonucleoside 5'-triphosphate = DNA(n+1) + diphosphate. In terms of biological role, DNA polymerase III is a complex, multichain enzyme responsible for most of the replicative synthesis in bacteria. The epsilon subunit contain the editing function and is a proofreading 3'-5' exonuclease. This is DNA polymerase III subunit epsilon (dnaQ) from Rickettsia felis (strain ATCC VR-1525 / URRWXCal2) (Rickettsia azadi).